The primary structure comprises 606 residues: Vitamin B12 transporter BtuB (606 aa).

An N-terminal signal peptide occupies residues 1–21 (MKKTLLAVALAPLCLPSQVFA). The short motif at 28-35 (DVMVVTAN) is the TonB box element. The 113-residue stretch at 40–152 (PIKNVIAPIS…IGGVLNIITA (113 aa)) folds into the TBDR plug domain. The TBDR beta-barrel domain maps to 157 to 606 (ESVAEVTAGG…SYYATATYKF (450 aa)). The TonB C-terminal box motif lies at 589 to 606 (ETYNVQERSYYATATYKF).

It belongs to the TonB-dependent receptor family. BtuB (TC 1.B.14.3.1) subfamily.

The protein resides in the cell outer membrane. Functionally, involved in the active translocation of vitamin B12 (cyanocobalamin) across the outer membrane to the periplasmic space. It derives its energy for transport by interacting with the trans-periplasmic membrane protein TonB. The polypeptide is Vitamin B12 transporter BtuB (Photobacterium profundum (strain SS9)).